The chain runs to 447 residues: Voltage-gated purine nucleotide uniporter SLC17A9 (447 aa).

Residues 1–26 (MPSQRSSLMQPIPEETRKTPSAAAED) form a disordered region. 11 helical membrane-spanning segments follow: residues 40-60 (ILLLGTCLLYCARVTMPVCTV), 74-94 (GIVLSSFFWGYCLTQVVGGHL), 103-123 (VILLSASAWGFITVTTPLLAH), 129-149 (LAFLTFSRILTGLLQGVYFPA), 169-189 (TVGAGSQVGTLVTGGVGSVLL), 192-212 (CGWQSVFYFSGGLTLLWAYYV), 252-272 (VWAAICSQLCSACSFFILLSW), 287-307 (WVFNVVPWMLAIPASLFSGFI), 327-347 (VMGLGLSSIFALCLGHTTSFL), 380-400 (GFLFGVANTAGALAGVVGVCL), and 413-433 (CVFHLVAIISNLGLGTFLVFG).

This sequence belongs to the major facilitator superfamily. Sodium/anion cotransporter family. As to expression, in brain, specifically expressed in the medulla and is associated with chromaffin granules (at protein level). Predominantly expressed in adrenal gland, brain and thyroid.

The protein localises to the cytoplasmic vesicle. It localises to the secretory vesicle. The protein resides in the chromaffin granule membrane. It is found in the secretory vesicle membrane. Its subcellular location is the lysosome membrane. The catalysed reaction is ATP(in) = ATP(out). It carries out the reaction ADP(in) = ADP(out). The enzyme catalyses GTP(in) = GTP(out). Its activity is regulated as follows. Activity is chloride-dependent. Voltage-gated ATP nucleotide uniporter that can also transport the purine nucleotides ADP and GTP. Uses the membrane potential as the driving force to control ATP accumulation in lysosomes and secretory vesicles. By controlling ATP storage in lysosomes, regulates ATP-dependent proteins of these organelles. Also indirectly regulates the exocytosis of ATP through its import into lysosomes in astrocytes and secretory vesicles such as adrenal chromaffin granules, mucin granules and synaptic vesicles. This Mus musculus (Mouse) protein is Voltage-gated purine nucleotide uniporter SLC17A9.